The chain runs to 622 residues: MNRYTTMRQLGDGTYGSVLMGKSNESGELVAIKRMKRKFYSWDECMNLREVKSLKKLNHANVIKLKEVIRENDHLYFIFEYMKENLYQLMKDRNKLFPESVIRNIMYQILQGLAFIHKHGFFHRDMKPENLLCMGPELVKIADFGLARELRSQPPYTDYVSTRWYRAPEVLLRSSVYSSPIDVWAVGSIMAELYTFRPLFPGTSEVDEIFKICQVLGTPKKSDWPEGYQLASSMNFRFPQCIPINLKTLIPNASSEAIQLMTEMLNWDPKKRPTASQALKHPYFQVGQVLGPSAHHLDAKQTLHKQLQPPEPKPSSSERDPKPLPNILDQPAGQPQPKQGHQPLQAIQPPQNTVVQPPPKQQGHHKQPQTMFPSIVKTIPTNPVSTVGHKGARRRWGQTVFKSGDSCDNIEDCDLGASHSKKPSMDAFKEKKKKESPFRFPEAGLPVSNHLKGENRNLHASLKSDTNLSTASTAKQYYLKQSRYLPGVNPKNVSLVAGGKDINSHSWNNQLFPKSLGSMGADLAFKRSNAAGNLGSYSAYSQTGCVPSFLKKEVGSAGQRIHLAPLGASAADYTWSTKTGQGQFSGRTYNPTAKNLNIVNRTQPVPSVHGRTDWVAKYGGHR.

In terms of domain architecture, Protein kinase spans 4 to 284 (YTTMRQLGDG…ASQALKHPYF (281 aa)). Residues 10–18 (LGDGTYGSV) and Lys-33 each bind ATP. Asp-125 serves as the catalytic Proton acceptor. Residue Thr-157 is modified to Phosphothreonine; by autocatalysis. The residue at position 159 (Tyr-159) is a Phosphotyrosine; by autocatalysis. The disordered stretch occupies residues 301 to 373 (QTLHKQLQPP…HHKQPQTMFP (73 aa)).

It belongs to the protein kinase superfamily. CMGC Ser/Thr protein kinase family. CDC2/CDKX subfamily. In terms of assembly, interacts with RP1. Interacts with AR and CDK20. Found in a complex containing MAK, AR and NCOA3. Interacts with FZR1 (via WD repeats). Requires Mg(2+) as cofactor. Autophosphorylated. Phosphorylated on serine and threonine residues. Expressed mainly in testicular cells at and after meiosis.

It is found in the nucleus. Its subcellular location is the cytoplasm. The protein resides in the cytoskeleton. The protein localises to the microtubule organizing center. It localises to the centrosome. It is found in the spindle. Its subcellular location is the midbody. The protein resides in the cell projection. The protein localises to the cilium. It localises to the photoreceptor outer segment. It is found in the photoreceptor inner segment. The enzyme catalyses L-seryl-[protein] + ATP = O-phospho-L-seryl-[protein] + ADP + H(+). The catalysed reaction is L-threonyl-[protein] + ATP = O-phospho-L-threonyl-[protein] + ADP + H(+). In terms of biological role, essential for the regulation of ciliary length and required for the long-term survival of photoreceptors. Could play an important function in spermatogenesis. Phosphorylates FZR1 in a cell cycle-dependent manner. Plays a role in the transcriptional coactivation of AR. This Rattus norvegicus (Rat) protein is Serine/threonine-protein kinase MAK (Mak).